The primary structure comprises 263 residues: Calpain small subunit 1 (263 aa).

N-acetylmethionine is present on Met1. Residue Ser6 is modified to Phosphoserine. One can recognise an EF-hand 1; atypical domain in the interval 91–125; it reads EEVRQFRRLFAQLAGDDMEVSATELMNILNKVVTR. Ca(2+) is bound by residues Ala104, Asp107, Glu109, Glu114, Asp132, Asp147, Asp149, Thr151, Lys153, and Glu158. EF-hand domains follow at residues 134 to 167, 164 to 199, 200 to 228, and 229 to 263; these read FGID…NNIK, NNIK…AGFR, LNEH…ISCL, and VRLD…TMYS. Lys174 carries the N6-acetyllysine modification. Ca(2+) contacts are provided by Asp177, Asp179, Ser181, Thr183, Glu188, and Asp220.

As to quaternary structure, homodimer or heterodimer of a large (catalytic) and a small (regulatory) subunit. In presence of calcium, the heterodimer dissociates.

The protein localises to the cytoplasm. It localises to the cell membrane. Regulatory subunit of the calcium-regulated non-lysosomal thiol-protease which catalyzes limited proteolysis of substrates involved in cytoskeletal remodeling and signal transduction. Essential for embryonic development. The chain is Calpain small subunit 1 (CAPNS1) from Bos taurus (Bovine).